Consider the following 305-residue polypeptide: Autophagy-related protein 14 (305 aa).

A coiled-coil region spans residues 34 to 147 (KMNLLILRQE…LDTLSHILAR (114 aa)).

This sequence belongs to the ATG14 family. In terms of assembly, component of the autophagy-specific VPS34 PI3-kinase complex I.

Its subcellular location is the preautophagosomal structure membrane. It localises to the vacuole membrane. Functionally, required for cytoplasm to vacuole transport (Cvt) and autophagy as a part of the autophagy-specific VPS34 PI3-kinase complex I. This complex is essential to recruit the ATG8-phosphatidylinositol conjugate and the ATG12-ATG5 conjugate to the pre-autophagosomal structure. ATG14 mediates the specific binding of the VPS34 PI3-kinase complex I to the preautophagosomal structure (PAS). In Kluyveromyces marxianus (strain DMKU3-1042 / BCC 29191 / NBRC 104275) (Yeast), this protein is Autophagy-related protein 14.